A 311-amino-acid chain; its full sequence is Sensor histidine kinase YcbM (311 aa).

Residues 1–21 traverse the membrane as a helical segment; sequence MTVLWVAAVIALACLNVIQFI. The Cytoplasmic portion of the chain corresponds to 22-311; sequence MKKKRDGNLA…FTITLKRMTY (290 aa). A Histidine kinase domain is found at 92 to 310; sequence NMSHDLKTPL…AFTITLKRMT (219 aa). H95 is subject to Phosphohistidine; by autocatalysis.

The protein resides in the cell membrane. It carries out the reaction ATP + protein L-histidine = ADP + protein N-phospho-L-histidine.. Member of the two-component regulatory system YcbM/YcbL. Probably activates YcbL by phosphorylation. The polypeptide is Sensor histidine kinase YcbM (ycbM) (Bacillus subtilis (strain 168)).